The sequence spans 388 residues: Protein DVU_0534 (388 aa).

The next 10 membrane-spanning stretches (helical) occupy residues 10 to 31 (LMTP…LTVL), 57 to 78 (LLCG…YLFG), 89 to 106 (AITT…ALNY), 130 to 144 (EVGL…VLFV), 166 to 191 (LTLV…LFLI), 199 to 222 (LWYS…SMVI), 254 to 265 (AASFVLAGYFMI), 291 to 306 (MLGF…ALGV), 316 to 328 (FASV…IVMN), and 354 to 368 (IGIS…ITVY).

Belongs to the NrfD family.

It localises to the cell membrane. HMWC (high-molecular-weight cytochrome c), ORF2, ORF3, ORF4, ORF5 and ORF6 in the HMC operon form a transmembrane protein complex that allows electron flow from the periplasmic hydrogenase to the cytoplasmic enzymes that catalyze reduction of sulfates. The polypeptide is Protein DVU_0534 (Nitratidesulfovibrio vulgaris (strain ATCC 29579 / DSM 644 / CCUG 34227 / NCIMB 8303 / VKM B-1760 / Hildenborough) (Desulfovibrio vulgaris)).